The primary structure comprises 266 residues: UPF0294 protein YafD (266 aa).

It belongs to the UPF0294 family.

The protein localises to the cytoplasm. The protein is UPF0294 protein YafD of Salmonella typhi.